A 205-amino-acid chain; its full sequence is Ribosomal RNA large subunit methyltransferase E (205 aa).

Positions 50, 52, 67, 83, and 111 each coordinate S-adenosyl-L-methionine. Catalysis depends on Lys151, which acts as the Proton acceptor.

Belongs to the class I-like SAM-binding methyltransferase superfamily. RNA methyltransferase RlmE family.

Its subcellular location is the cytoplasm. The catalysed reaction is uridine(2552) in 23S rRNA + S-adenosyl-L-methionine = 2'-O-methyluridine(2552) in 23S rRNA + S-adenosyl-L-homocysteine + H(+). Its function is as follows. Specifically methylates the uridine in position 2552 of 23S rRNA at the 2'-O position of the ribose in the fully assembled 50S ribosomal subunit. This is Ribosomal RNA large subunit methyltransferase E from Thermoplasma acidophilum (strain ATCC 25905 / DSM 1728 / JCM 9062 / NBRC 15155 / AMRC-C165).